A 680-amino-acid chain; its full sequence is Probable potassium transport system protein Kup (680 aa).

Helical transmembrane passes span 16 to 36, 60 to 80, 103 to 123, 150 to 170, 177 to 197, 222 to 242, 255 to 275, 302 to 322, 351 to 371, 380 to 400, 407 to 427, and 432 to 452; these read IAGMLITMGVVYGDIGTSPLY, ISLVFWTLMLMTTVKYVLIAL, WLVIPAIIGGATLLADGMLTP, EVIILTVTILSVLFFIQKFGT, FGPIMLIWFTFIGAIGVMNLM, VGILILGSVFLATTGAEALYS, SWPYIAACLVLNYFGQGVWLL, IPAILLATVAAIIASQALISG, LYISIVNWILWAVCLAVVFYF, AYGLAITITMLMTTILLFHYL, WFLAYVVLLFFGAIETIFFIA, and FMHGGYVTVLIAFVILFIMFV.

Belongs to the HAK/KUP transporter (TC 2.A.72) family.

It localises to the cell membrane. It carries out the reaction K(+)(in) + H(+)(in) = K(+)(out) + H(+)(out). Functionally, transport of potassium into the cell. Likely operates as a K(+):H(+) symporter. The protein is Probable potassium transport system protein Kup of Latilactobacillus sakei subsp. sakei (strain 23K) (Lactobacillus sakei subsp. sakei).